The primary structure comprises 187 residues: Peptide methionine sulfoxide reductase A2-1 (187 aa).

Belongs to the MsrA Met sulfoxide reductase family.

It is found in the cytoplasm. The protein localises to the cytosol. It catalyses the reaction L-methionyl-[protein] + [thioredoxin]-disulfide + H2O = L-methionyl-(S)-S-oxide-[protein] + [thioredoxin]-dithiol. The catalysed reaction is [thioredoxin]-disulfide + L-methionine + H2O = L-methionine (S)-S-oxide + [thioredoxin]-dithiol. In terms of biological role, catalyzes the reduction of methionine sulfoxide (MetSO) to methionine in proteins. Plays a protective role against oxidative stress by restoring activity to proteins that have been inactivated by methionine oxidation. MSRA family specifically reduces the MetSO S-enantiomer. The sequence is that of Peptide methionine sulfoxide reductase A2-1 (MSRA2-1) from Oryza sativa subsp. japonica (Rice).